A 344-amino-acid polypeptide reads, in one-letter code: Enoyl-[acyl-carrier-protein] reductase, mitochondrial (344 aa).

The transit peptide at 1-14 (MLKVLSLRSALQRA) directs the protein to the mitochondrion. Tyr69 serves as the catalytic Proton donor. NADP(+)-binding positions include Asn142, 168 to 171 (NSAV), 191 to 193 (RSR), 255 to 258 (YGGM), 280 to 282 (FWM), and Lys338.

Belongs to the zinc-containing alcohol dehydrogenase family. Quinone oxidoreductase subfamily. In terms of assembly, homodimer.

The protein localises to the mitochondrion. The enzyme catalyses a 2,3-saturated acyl-[ACP] + NADP(+) = a (2E)-enoyl-[ACP] + NADPH + H(+). Its function is as follows. Catalyzes the NADPH-dependent reduction of trans-2-enoyl thioesters in mitochondrial fatty acid synthesis (fatty acid synthesis type II). Fatty acid chain elongation in mitochondria uses acyl carrier protein (ACP) as an acyl group carrier, but the enzyme accepts both ACP and CoA thioesters as substrates in vitro. May provide the octanoyl chain used for lipoic acid biosynthesis, regulating protein lipoylation and mitochondrial respiratory activity. Involved in iron homeostasis; affecting Fe-S cluster assembly and ceramide metabolism. Required for proper morphology and bioenergetic functions of mitochondria. Required for maintenance of neurons. The chain is Enoyl-[acyl-carrier-protein] reductase, mitochondrial from Caenorhabditis elegans.